The primary structure comprises 107 residues: Phosphoribosyl-ATP pyrophosphatase (107 aa).

The protein belongs to the PRA-PH family.

Its subcellular location is the cytoplasm. The enzyme catalyses 1-(5-phospho-beta-D-ribosyl)-ATP + H2O = 1-(5-phospho-beta-D-ribosyl)-5'-AMP + diphosphate + H(+). It functions in the pathway amino-acid biosynthesis; L-histidine biosynthesis; L-histidine from 5-phospho-alpha-D-ribose 1-diphosphate: step 2/9. The polypeptide is Phosphoribosyl-ATP pyrophosphatase (Sinorhizobium medicae (strain WSM419) (Ensifer medicae)).